A 222-amino-acid polypeptide reads, in one-letter code: Adapter protein MecA (222 aa).

Belongs to the MecA family. Homodimer.

Functionally, enables the recognition and targeting of unfolded and aggregated proteins to the ClpC protease or to other proteins involved in proteolysis. The sequence is that of Adapter protein MecA from Lysinibacillus sphaericus (strain C3-41).